The sequence spans 187 residues: Protein TIFY 11b (187 aa).

Positions 68–103 (ATAPAAPLTIFYGGRMVVFEDFPADKAAEVMRMASS) constitute a Tify domain. A Jas motif is present at residues 121 to 145 (PIMRKASLQRFFAKRKDRLAATTPY). Residues 123–130 (MRKASLQR) carry the Nuclear localization signal motif. The disordered stretch occupies residues 139-168 (LAATTPYARPSPAETKASEPEEKKTPTSWL). A compositionally biased stretch (basic and acidic residues) spans 154 to 163 (KASEPEEKKT).

Belongs to the TIFY/JAZ family. Interacts with COI1B in a coronatine-dependent manner. Coronatine is an analog of jasmonoyl isoleucine (JA-Ile). Post-translationally, ubiquitinated. Targeted for degradation by the SCF(COI1) E3 ubiquitin ligase-proteasome pathway during jasmonate signaling.

The protein resides in the nucleus. In terms of biological role, repressor of jasmonate responses. This Oryza sativa subsp. japonica (Rice) protein is Protein TIFY 11b.